Here is a 50-residue protein sequence, read N- to C-terminus: Metallothionein zym1 (50 aa).

Zn(2+) contacts are provided by Cys7, Cys15, Cys17, Cys21, Cys23, Cys26, Cys30, Cys32, Cys40, Cys42, Cys45, and Cys47.

The protein belongs to the metallothionein superfamily.

It localises to the cytoplasm. The protein localises to the nucleus. Its function is as follows. Metallothionein involved in tolerance to zinc and cadmium. Binds four zinc ions. This Schizosaccharomyces pombe (strain 972 / ATCC 24843) (Fission yeast) protein is Metallothionein zym1 (zym1).